We begin with the raw amino-acid sequence, 322 residues long: Corticotropin-releasing factor-binding protein (322 aa).

The first 24 residues, 1–24, serve as a signal peptide directing secretion; that stretch reads MSPNFKLQCHFTLILLTALRGESR. 5 cysteine pairs are disulfide-bonded: Cys-60/Cys-81, Cys-104/Cys-141, Cys-183/Cys-205, Cys-237/Cys-264, and Cys-277/Cys-318. An N-linked (GlcNAc...) asparagine glycan is attached at Asn-204.

The protein belongs to the CRF-binding protein family.

It is found in the secreted. In terms of biological role, binds CRF and inactivates it. May prevent inappropriate pituitary-adrenal stimulation in pregnancy. This chain is Corticotropin-releasing factor-binding protein (Crhbp), found in Rattus norvegicus (Rat).